A 103-amino-acid polypeptide reads, in one-letter code: Putative protein YmfH (103 aa).

The disordered stretch occupies residues 1 to 34 (MVNAAQRTRVKVEADNRPSVDTHPPGVQPSPGTG). A compositionally biased stretch (basic and acidic residues) spans 10-20 (VKVEADNRPSV). 2 consecutive transmembrane segments (helical) span residues 42–62 (MLCV…TALF) and 73–93 (GLIT…CFVE).

The protein localises to the cell inner membrane. The sequence is that of Putative protein YmfH (ymfH) from Escherichia coli (strain K12).